We begin with the raw amino-acid sequence, 373 residues long: Caspase-4 (373 aa).

A required for LPS-binding region spans residues 1 to 59 (MAENKHPDKPLKVLEQLGKEVLTEYLEKLVQSNVLKLKEEDKQKFNNAERSDKRWVFVD). Residues 1–80 (MAENKHPDKP…MLLQTFFSVD (80 aa)) constitute a propeptide that is removed on maturation. The CARD domain maps to 1 to 91 (MAENKHPDKP…GSHHGEANLE (91 aa)). The residue at position 83 (Ser83) is a Phosphoserine. Active-site residues include His206 and Cys254. The propeptide occupies 267–285 (SSKPQLCRGVDLPRNMEAD). The residue at position 310 (Arg310) is a (Microbial infection) ADP-riboxanated arginine.

The protein belongs to the peptidase C14A family. Heterotetramer that consists of two anti-parallel arranged heterodimers, each one formed by a 20 kDa (Caspase-4 subunit p20) and a 10 kDa (Caspase-4 subunit p10) subunit. Upon direct LPS-binding, forms large homooligomers, resulting in its activation. These oligomers are often referred to as 'non-canonical inflammasomes'. In its precursor form, interacts with TMEM214; this interaction is required for association with the endoplasmic reticulum membrane. Interacts with CASP1. Interacts with NOD2. Interacts with Serpinb1a, Serpinb1b and Serpinb1c; these interactions regulate CASP4 activity. In terms of assembly, heterotetramer that consists of two anti-parallel arranged heterodimers, each one formed by a 20 kDa (Caspase-4 subunit p20) and a 10 kDa (Caspase-4 subunit p10) subunit. In terms of processing, in response to activation signals, undergoes autoproteolytic cleavage and activation. Post-translationally, (Microbial infection) ADP-riboxanation by S.flexneri OspC3 blocks CASP4 autoprocessing, preventing CASP4 activation and ability to recognize and cleave GSDMD, thereby thwarting the inflammasome/pyroptosis-mediated defense. Widely expressed, including in thymus, lung and spleen (at protein level). Very low levels, if any, in the brain.

It localises to the cytoplasm. Its subcellular location is the cytosol. The protein resides in the endoplasmic reticulum membrane. It is found in the mitochondrion. The protein localises to the inflammasome. It localises to the secreted. It catalyses the reaction Strict requirement for Asp at the P1 position and has a preferred cleavage sequence of (Ile/Leu/Val/Phe)-Gly-His-Asp-|-.. With respect to regulation, activated by homooligomerization induced by direct binding to cytosolic LPS, in a TLR4-independent manner. In addition to LPS, CASP4/CASP11 may also be activated by oxidized phospholipid 1-palmitoyl-2-arachidonoyl- sn-glycero-3-phosphorylcholine, an oxidized phospholipid (oxPAPC), in dendritic cells, promoting adaptive immunity. The role of oxPAPC is however unclear and another report suggests that oxPAPC competes with LPS-binding and inhibits the non-canonical inflammasome in macrophages. Inflammatory caspase that acts as the effector of the non-canonical inflammasome by mediating lipopolysaccharide (LPS)-induced pyroptosis. Also indirectly activates the NLRP3 and NLRP6 inflammasomes. Acts as a thiol protease that cleaves a tetrapeptide after an Asp residue at position P1: catalyzes cleavage of CGAS and GSDMD. In contrast to its human ortholog, does not cleave IL18. Effector of the non-canonical inflammasome independently of NLRP3 inflammasome and CASP1: the non-canonical inflammasome promotes pyroptosis through GSDMD cleavage without involving secretion of cytokine IL1B and IL18. In the non-canonical inflammasome, CASP4/CASP11 is activated by direct binding to the lipid A moiety of LPS without the need of an upstream sensor. LPS-binding promotes CASP4/CASP11 activation and CASP4/CASP11-mediated cleavage of GSDMD, followed by pyroptosis of infected cells and their extrusion into the gut lumen. Also indirectly promotes secretion of mature cytokines (IL1A, IL18 and HMGB1) downstream of GSDMD-mediated pyroptosis via activation of the NLRP3 and NLRP6 inflammasomes. Involved in NLRP3-dependent CASP1 activation and IL1B and IL18 secretion in response to non-canonical activators, such as UVB radiation or cholera enterotoxin. Involved in NLRP6 inflammasome-dependent activation in response to lipoteichoic acid (LTA), a cell-wall component of Gram-positive bacteria, which leads to CASP1 activation and IL1B and IL18 secretion. Involved in LPS-induced IL6 secretion; this activity may not require caspase enzymatic activity. The non-canonical inflammasome is required for innate immunity to cytosolic, but not vacuolar, bacteria. Plays a crucial role in the restriction of S.typhimurium replication in colonic epithelial cells during infection. Activation of the non-canonical inflammasome in brain endothelial cells can lead to excessive pyroptosis, leading to blood-brain barrier breakdown. Pyroptosis limits bacterial replication, while cytokine secretion promotes the recruitment and activation of immune cells and triggers mucosal inflammation. May also act as an activator of adaptive immunity in dendritic cells, following activation by oxidized phospholipid 1-palmitoyl-2-arachidonoyl- sn-glycero-3-phosphorylcholine, an oxidized phospholipid (oxPAPC). Cleavage of GSDMD is not strictly dependent on the consensus cleavage site but depends on an exosite interface on CASP4/CASP11 that recognizes and binds the Gasdermin-D, C-terminal (GSDMD-CT) part. In contrast, it does not directly process IL1B. During non-canonical inflammasome activation, cuts CGAS and may play a role in the regulation of antiviral innate immune activation. This Mus musculus (Mouse) protein is Caspase-4.